We begin with the raw amino-acid sequence, 311 residues long: Heme A synthase (311 aa).

The Cytoplasmic portion of the chain corresponds to 1-6 (MQRFIK). Residues 7-27 (WLAVITSLDLLVVLLGGALVT) traverse the membrane as a helical segment. Topologically, residues 28–62 (KTGSGQGCGKSWPLCNGEFVPSNLSMETIIELSHR) are extracellular. Cys35 and Cys42 are joined by a disulfide. Glu58 is an active-site residue. Heme o is bound at residue His61. The helical transmembrane segment at 63–83 (LTSGSAGILVTLLCILSWKYY) threads the bilayer. The Cytoplasmic segment spans residues 84–91 (KHVRETKT). Residues 92-112 (LAILSFVFLVAQALMGAAAVV) traverse the membrane as a helical segment. The Extracellular portion of the chain corresponds to 113-121 (WGQMPAVLA). The chain crosses the membrane as a helical span at residues 122–142 (IHFGISLISFASVILLTCLIF). His123 is a binding site for heme o. Over 143–159 (EIDQKFDARSLIMDKKM) the chain is Cytoplasmic. Residues 160–180 (KFHIYGVTIYSYIVVYTGALV) traverse the membrane as a helical segment. Residues 181 to 211 (RHERATLACPDFPLCSKSRPMPTQLHEWVQM) are Extracellular-facing. Cysteines 189 and 195 form a disulfide. A helical membrane pass occupies residues 212 to 232 (GHRVAAMLIFAWILYAMIIAI). His213 contributes to the heme b binding site. Residues 233 to 243 (RHYKQQRVVYW) are Cytoplasmic-facing. The chain crosses the membrane as a helical span at residues 244–264 (GWIISFILVTLQAIVGILVVF). Topologically, residues 265 to 271 (TNASLAM) are extracellular. Residues 272–292 (ALLHSLFISCLFAVLCYLVMI) form a helical membrane-spanning segment. His275 serves as a coordination point for heme b. Residues 293 to 311 (GTRSTVNAKETESTSKQTK) are Cytoplasmic-facing.

This sequence belongs to the COX15/CtaA family. Type 1 subfamily. As to quaternary structure, interacts with CtaB. Heme b is required as a cofactor.

Its subcellular location is the cell membrane. It catalyses the reaction Fe(II)-heme o + 2 A + H2O = Fe(II)-heme a + 2 AH2. Its pathway is porphyrin-containing compound metabolism; heme A biosynthesis; heme A from heme O: step 1/1. Functionally, catalyzes the conversion of heme O to heme A by two successive hydroxylations of the methyl group at C8. The first hydroxylation forms heme I, the second hydroxylation results in an unstable dihydroxymethyl group, which spontaneously dehydrates, resulting in the formyl group of heme A. This is Heme A synthase from Bacillus mycoides (strain KBAB4) (Bacillus weihenstephanensis).